A 22-amino-acid chain; its full sequence is Fuctinin-1 (22 aa).

A disordered region spans residues 1-22; it reads SASPGLPKGEKEQQEAIEHIDE. Residues 8–22 are compositionally biased toward basic and acidic residues; that stretch reads KGEKEQQEAIEHIDE.

It to human SET/PHAPII protein. As to quaternary structure, oligomer.

The protein resides in the cytoplasm. Its function is as follows. Has a role in the physiological regulation of fucosylation processes. The sequence is that of Fuctinin-1 from Rattus norvegicus (Rat).